Reading from the N-terminus, the 189-residue chain is Heme-binding protein 1 (189 aa).

It belongs to the HEBP family. Monomer.

Its subcellular location is the cytoplasm. Functionally, may bind free porphyrinogens that may be present in the cell and thus facilitate removal of these potentially toxic compound. Binds with a high affinity to one molecule of heme or porphyrins. It binds metalloporphyrins, free porphyrins and N-methylprotoporphyrin with similar affinities. This Sus scrofa (Pig) protein is Heme-binding protein 1 (HEBP1).